The primary structure comprises 167 residues: EF-hand calcium-binding domain-containing protein 11 (167 aa).

EF-hand domains are found at residues 17 to 52 (AERK…LFGY), 91 to 126 (DPYE…VAPR), and 127 to 162 (LQER…GLAN). Positions 140, 142, 144, 146, and 151 each coordinate Ca(2+).

This chain is EF-hand calcium-binding domain-containing protein 11 (efcab11), found in Danio rerio (Zebrafish).